Consider the following 465-residue polypeptide: Soluble pyridine nucleotide transhydrogenase (465 aa).

E35–C44 contributes to the FAD binding site.

It belongs to the class-I pyridine nucleotide-disulfide oxidoreductase family. Requires FAD as cofactor.

It is found in the cytoplasm. The catalysed reaction is NAD(+) + NADPH = NADH + NADP(+). In terms of biological role, conversion of NADPH, generated by peripheral catabolic pathways, to NADH, which can enter the respiratory chain for energy generation. The polypeptide is Soluble pyridine nucleotide transhydrogenase (Photorhabdus laumondii subsp. laumondii (strain DSM 15139 / CIP 105565 / TT01) (Photorhabdus luminescens subsp. laumondii)).